Reading from the N-terminus, the 226-residue chain is UPF0173 metal-dependent hydrolase SRU_1937 (226 aa).

This sequence belongs to the UPF0173 family.

This Salinibacter ruber (strain DSM 13855 / M31) protein is UPF0173 metal-dependent hydrolase SRU_1937.